The sequence spans 362 residues: Adenosine deaminase (362 aa).

2 residues coordinate Zn(2+): His19 and His21. Residues His21, Asp23, and Gly181 each coordinate substrate. Residue His208 coordinates Zn(2+). Glu211 functions as the Proton donor in the catalytic mechanism. Zn(2+) is bound at residue Asp300.

The protein belongs to the metallo-dependent hydrolases superfamily. Adenosine and AMP deaminases family. Adenosine deaminase subfamily. Requires Zn(2+) as cofactor.

It carries out the reaction adenosine + H2O + H(+) = inosine + NH4(+). It catalyses the reaction 2'-deoxyadenosine + H2O + H(+) = 2'-deoxyinosine + NH4(+). Functionally, catalyzes the hydrolytic deamination of adenosine and 2-deoxyadenosine. This chain is Adenosine deaminase, found in Mycobacterium sp. (strain JLS).